Here is a 208-residue protein sequence, read N- to C-terminus: Uracil phosphoribosyltransferase (208 aa).

5-phospho-alpha-D-ribose 1-diphosphate is bound by residues arginine 78, arginine 103, and 130–138; that span reads DPMLATGGS. Uracil contacts are provided by residues isoleucine 193 and 198–200; that span reads GDA. Residue aspartate 199 participates in 5-phospho-alpha-D-ribose 1-diphosphate binding.

Belongs to the UPRTase family. Mg(2+) is required as a cofactor.

The catalysed reaction is UMP + diphosphate = 5-phospho-alpha-D-ribose 1-diphosphate + uracil. It participates in pyrimidine metabolism; UMP biosynthesis via salvage pathway; UMP from uracil: step 1/1. Allosterically activated by GTP. In terms of biological role, catalyzes the conversion of uracil and 5-phospho-alpha-D-ribose 1-diphosphate (PRPP) to UMP and diphosphate. The chain is Uracil phosphoribosyltransferase from Actinobacillus succinogenes (strain ATCC 55618 / DSM 22257 / CCUG 43843 / 130Z).